Consider the following 476-residue polypeptide: MLAVKVYNTLTRKKEEFKPLVPGQISMYVCGPTVYNYIHIGNARSSIAFDTIRRYLEYKGYKVKYVSNFTDVDDKMINEAHAEETTVPKLAEKFINAFLEDTTALNIEPATLHPRATHEIKEIIAFIQTLIDKGYAYESHGDVYYRAKKFKHYGELSDQNIERLEEGASEHINDEEQNRKEDPIDFALWKAQKEPDEIAWDSPWGKGRPGWHIECSVMSTKYLGDTIDIHGGGQDLEFPHHENEIAQSEAKTGKKFVNYWLHNGFVTVGKDQEKMSKSLHNFVTVHDILKEVDPQVLRFFMASVQYRRQINYSAENLQQAATILDRFKNTLVNINYRLEDDTPSKDSDELAKAIAKTNEKFEVAMDDDFNVQNALTAIYDLLPIVNANANAEKADKKSLKLFKDKLSAWLLVFGIDTEKLCSQSAGSNDEIDQLVKKRDEARKKKDWATSDQIRDQLKEMGITIQDTPQGTRWTRD.

Cysteine 30 provides a ligand contact to Zn(2+). Residues 32–42 (PTVYNYIHIGN) carry the 'HIGH' region motif. Zn(2+) contacts are provided by cysteine 215, histidine 240, and glutamate 244. A 'KMSKS' region motif is present at residues 274 to 278 (KMSKS). Residue lysine 277 coordinates ATP.

Belongs to the class-I aminoacyl-tRNA synthetase family. Monomer. The cofactor is Zn(2+).

The protein localises to the cytoplasm. The enzyme catalyses tRNA(Cys) + L-cysteine + ATP = L-cysteinyl-tRNA(Cys) + AMP + diphosphate. In Lactobacillus helveticus (strain DPC 4571), this protein is Cysteine--tRNA ligase.